An 866-amino-acid polypeptide reads, in one-letter code: MYRTHRQHSLLSSGGVPSFIGGLVVFVSAAFNAQAETWFDPAFFKDDPSMVADLSRFEKGQKITPGVYRVDIVLNQTIVDTRNVNFVEITPEKGIAACLTTESLDAMGVNTDAFPAFKQLDKQACVPLAEIIPDASVTFNVNKLRLEISVPQIAIKSNARGYVPPERWDEGINALLLGYSFSGANSIHSSADSDSGDSYFLNLNSGVNLGPWRLRNNSTWSRSSGQTAEWKNLSSYLQRAVIPLKGELTVGDDYTAGDFFDSVSFRGVQLASDDNMLPDSLKGFAPVVRGIAKSNAQITIKQNGYTIYQTYVSPGAFEISDLYSTSSSGDLLVEIKEADGSVNSYSVPFSSVPLLQRQGRIKYAVTLAKYRTNSNEQQESKFAQATLQWGGPWGTTWYGGGQYAEYYRAAMFGLGFNLGDFGAISFDATQAKSTLADQSEHKGQSYRFLYAKTLNHLGTNFQLMGYRYSTSGFYTLSDTMYKHMDGYEFNDGDDEDTPMWSRYYNLFYTKRGKLQVNISQQLGEYGSFYLSGSQQTYWHTDQQDRLLQFGYNTQIKDLSLGISWNYSKSRGQPDADQVFALNFSLPLNLLLPRSNDSYTRKKNYAWMTSNTSIDNEGHTTQNLGLTETLLDDGNLSYSVQQGYNSEGKTANGSASMDYKGAFADARVGYNYSDNGSQQQLNYALSGSLVAHSQGITLGQSLGETNVLIAAPGAENTRVANSTGLKTDWRGYTVVPYATSYRENRIALDAASLKRNVDLENAVVNVVPTKGALVLAEFNAHAGARVLMKTSKQGIPLRFGAIATLDGVQANSGIIDDDGSLYMAGLPAKGTISVRWGEAPDQICHINYELTEQQINSAITRMDAICR.

A signal peptide spans M1 to A35.

Belongs to the fimbrial export usher family.

The protein localises to the cell outer membrane. Functionally, part of the elfADCG-ycbUVF fimbrial operon, which promotes adhesion of bacteria to different abiotic surfaces. Could be involved in the export and assembly of the ElfA fimbrial subunits across the outer membrane. The sequence is that of Probable outer membrane usher protein ElfC (elfC) from Escherichia coli (strain K12).